The chain runs to 194 residues: ATP-dependent Clp protease proteolytic subunit (194 aa).

The Nucleophile role is filled by Ser98. His123 is an active-site residue.

The protein belongs to the peptidase S14 family. Fourteen ClpP subunits assemble into 2 heptameric rings which stack back to back to give a disk-like structure with a central cavity, resembling the structure of eukaryotic proteasomes.

The protein localises to the cytoplasm. The catalysed reaction is Hydrolysis of proteins to small peptides in the presence of ATP and magnesium. alpha-casein is the usual test substrate. In the absence of ATP, only oligopeptides shorter than five residues are hydrolyzed (such as succinyl-Leu-Tyr-|-NHMec, and Leu-Tyr-Leu-|-Tyr-Trp, in which cleavage of the -Tyr-|-Leu- and -Tyr-|-Trp bonds also occurs).. In terms of biological role, cleaves peptides in various proteins in a process that requires ATP hydrolysis. Has a chymotrypsin-like activity. Plays a major role in the degradation of misfolded proteins. The polypeptide is ATP-dependent Clp protease proteolytic subunit (Clostridium botulinum (strain Loch Maree / Type A3)).